Here is a 481-residue protein sequence, read N- to C-terminus: Cysteine--tRNA ligase (481 aa).

Cysteine 29 contacts Zn(2+). A 'HIGH' region motif is present at residues 31 to 41 (PTVYDYSHLGH). The Zn(2+) site is built by cysteine 210, histidine 235, and glutamate 239. Residues 272 to 276 (KMSKS) carry the 'KMSKS' region motif. Lysine 275 serves as a coordination point for ATP.

Belongs to the class-I aminoacyl-tRNA synthetase family. In terms of assembly, monomer. It depends on Zn(2+) as a cofactor.

The protein resides in the cytoplasm. It carries out the reaction tRNA(Cys) + L-cysteine + ATP = L-cysteinyl-tRNA(Cys) + AMP + diphosphate. This chain is Cysteine--tRNA ligase, found in Anaeromyxobacter sp. (strain K).